Consider the following 207-residue polypeptide: Holliday junction branch migration complex subunit RuvA (207 aa).

Residues 1-65 (MYDYIRGVLT…ETEHVLYGFH (65 aa)) form a domain I region. Residues 66-144 (TRGERECFRM…DLLPLDAQIL (79 aa)) form a domain II region. A flexible linker region spans residues 145 to 155 (ASWEPAKPSCM). The domain III stretch occupies residues 155 to 207 (MEEGIQALAALGYPKSSAERMIAEAMSELPDHASVAEILPIALKKNLQGLNKI).

This sequence belongs to the RuvA family. In terms of assembly, homotetramer. Forms an RuvA(8)-RuvB(12)-Holliday junction (HJ) complex. HJ DNA is sandwiched between 2 RuvA tetramers; dsDNA enters through RuvA and exits via RuvB. An RuvB hexamer assembles on each DNA strand where it exits the tetramer. Each RuvB hexamer is contacted by two RuvA subunits (via domain III) on 2 adjacent RuvB subunits; this complex drives branch migration. In the full resolvosome a probable DNA-RuvA(4)-RuvB(12)-RuvC(2) complex forms which resolves the HJ.

The protein resides in the cytoplasm. Its function is as follows. The RuvA-RuvB-RuvC complex processes Holliday junction (HJ) DNA during genetic recombination and DNA repair, while the RuvA-RuvB complex plays an important role in the rescue of blocked DNA replication forks via replication fork reversal (RFR). RuvA specifically binds to HJ cruciform DNA, conferring on it an open structure. The RuvB hexamer acts as an ATP-dependent pump, pulling dsDNA into and through the RuvAB complex. HJ branch migration allows RuvC to scan DNA until it finds its consensus sequence, where it cleaves and resolves the cruciform DNA. In Chlamydia abortus (strain DSM 27085 / S26/3) (Chlamydophila abortus), this protein is Holliday junction branch migration complex subunit RuvA.